The chain runs to 209 residues: ATP-dependent Clp protease proteolytic subunit (209 aa).

The active-site Nucleophile is the Ser106. Residue His131 is part of the active site.

Belongs to the peptidase S14 family. Fourteen ClpP subunits assemble into 2 heptameric rings which stack back to back to give a disk-like structure with a central cavity, resembling the structure of eukaryotic proteasomes.

It localises to the cytoplasm. The enzyme catalyses Hydrolysis of proteins to small peptides in the presence of ATP and magnesium. alpha-casein is the usual test substrate. In the absence of ATP, only oligopeptides shorter than five residues are hydrolyzed (such as succinyl-Leu-Tyr-|-NHMec, and Leu-Tyr-Leu-|-Tyr-Trp, in which cleavage of the -Tyr-|-Leu- and -Tyr-|-Trp bonds also occurs).. In terms of biological role, cleaves peptides in various proteins in a process that requires ATP hydrolysis. Has a chymotrypsin-like activity. Plays a major role in the degradation of misfolded proteins. The sequence is that of ATP-dependent Clp protease proteolytic subunit from Caulobacter vibrioides (strain ATCC 19089 / CIP 103742 / CB 15) (Caulobacter crescentus).